The primary structure comprises 322 residues: HPr kinase/phosphorylase (322 aa).

Residues His-146 and Lys-167 contribute to the active site. Residue 161–168 participates in ATP binding; that stretch reads GDSGLGKS. Ser-168 is a Mg(2+) binding site. Catalysis depends on Asp-185, which acts as the Proton acceptor; for phosphorylation activity. Proton donor; for dephosphorylation activity. The tract at residues 209 to 218 is important for the catalytic mechanism of both phosphorylation and dephosphorylation; that stretch reads LEVRGLGLLD. Glu-210 lines the Mg(2+) pocket. Arg-250 is an active-site residue. An important for the catalytic mechanism of dephosphorylation region spans residues 271 to 276; the sequence is QVAAGR.

Belongs to the HPrK/P family. In terms of assembly, homohexamer. Mg(2+) serves as cofactor.

It catalyses the reaction [HPr protein]-L-serine + ATP = [HPr protein]-O-phospho-L-serine + ADP + H(+). The catalysed reaction is [HPr protein]-O-phospho-L-serine + phosphate + H(+) = [HPr protein]-L-serine + diphosphate. In terms of biological role, catalyzes the ATP- as well as the pyrophosphate-dependent phosphorylation of a specific serine residue in HPr, a phosphocarrier protein of the phosphoenolpyruvate-dependent sugar phosphotransferase system (PTS). HprK/P also catalyzes the pyrophosphate-producing, inorganic phosphate-dependent dephosphorylation (phosphorolysis) of seryl-phosphorylated HPr (P-Ser-HPr). The protein is HPr kinase/phosphorylase of Burkholderia multivorans (strain ATCC 17616 / 249).